Here is a 202-residue protein sequence, read N- to C-terminus: GTP cyclohydrolase 1 (202 aa).

Zn(2+)-binding residues include Cys-93, His-96, and Cys-164.

The protein belongs to the GTP cyclohydrolase I family. In terms of assembly, toroid-shaped homodecamer, composed of two pentamers of five dimers.

It carries out the reaction GTP + H2O = 7,8-dihydroneopterin 3'-triphosphate + formate + H(+). The protein operates within cofactor biosynthesis; 7,8-dihydroneopterin triphosphate biosynthesis; 7,8-dihydroneopterin triphosphate from GTP: step 1/1. The protein is GTP cyclohydrolase 1 of Pelagibacter ubique (strain HTCC1062).